The primary structure comprises 1407 residues: DNA-directed RNA polymerase subunit beta' (1407 aa).

Residues Cys-70, Cys-72, Cys-85, and Cys-88 each coordinate Zn(2+). Positions 460, 462, and 464 each coordinate Mg(2+). 4 residues coordinate Zn(2+): Cys-814, Cys-888, Cys-895, and Cys-898.

The protein belongs to the RNA polymerase beta' chain family. In terms of assembly, the RNAP catalytic core consists of 2 alpha, 1 beta, 1 beta' and 1 omega subunit. When a sigma factor is associated with the core the holoenzyme is formed, which can initiate transcription. It depends on Mg(2+) as a cofactor. Zn(2+) serves as cofactor.

The catalysed reaction is RNA(n) + a ribonucleoside 5'-triphosphate = RNA(n+1) + diphosphate. Its function is as follows. DNA-dependent RNA polymerase catalyzes the transcription of DNA into RNA using the four ribonucleoside triphosphates as substrates. The polypeptide is DNA-directed RNA polymerase subunit beta' (Salmonella arizonae (strain ATCC BAA-731 / CDC346-86 / RSK2980)).